A 452-amino-acid chain; its full sequence is Mitochondrial distribution and morphology protein 10 (452 aa).

Positions 105 to 130 (PLAPESWDSDGPGHEGSDGQEDETTP) are disordered.

Belongs to the MDM10 family. Component of the ER-mitochondria encounter structure (ERMES) or MDM complex, composed of MMM1, MDM10, MDM12 and MDM34. Associates with the mitochondrial outer membrane sorting assembly machinery SAM(core) complex.

The protein resides in the mitochondrion outer membrane. Functionally, component of the ERMES/MDM complex, which serves as a molecular tether to connect the endoplasmic reticulum and mitochondria. Components of this complex are involved in the control of mitochondrial shape and protein biogenesis and may function in phospholipid exchange. MDM10 is involved in the late assembly steps of the general translocase of the mitochondrial outer membrane (TOM complex). Functions in the TOM40-specific route of the assembly of outer membrane beta-barrel proteins, including the association of TOM40 with the receptor TOM22 and small TOM proteins. Can associate with the SAM(core) complex as well as the MDM12-MMM1 complex, both involved in late steps of the major beta-barrel assembly pathway, that is responsible for biogenesis of all outer membrane beta-barrel proteins. May act as a switch that shuttles between both complexes and channels precursor proteins into the TOM40-specific pathway. Plays a role in mitochondrial morphology and in the inheritance of mitochondria. In Uncinocarpus reesii (strain UAMH 1704), this protein is Mitochondrial distribution and morphology protein 10.